Reading from the N-terminus, the 310-residue chain is Probable manganese-dependent inorganic pyrophosphatase (310 aa).

His9, Asp13, Asp15, Asp75, His97, and Asp149 together coordinate Mn(2+).

The protein belongs to the PPase class C family. The cofactor is Mn(2+).

The protein resides in the cytoplasm. The catalysed reaction is diphosphate + H2O = 2 phosphate + H(+). This is Probable manganese-dependent inorganic pyrophosphatase from Brevibacillus brevis (strain 47 / JCM 6285 / NBRC 100599).